A 1223-amino-acid chain; its full sequence is Kinesin-like protein costa (1223 aa).

The Kinesin motor domain maps to 4–394 (PIQVAVRICP…LQFAFKVQCV (391 aa)). The disordered stretch occupies residues 13–90 (PYTEPSENRK…LPTDSNGNEN (78 aa)). Residues 39-62 (AKAESFSDSEDNKNDASNRQRPEE) show a composition bias toward basic and acidic residues. ATP is bound at residue 178–185 (GQRGQGKT). 3 disordered regions span residues 494–528 (RSQK…ESQR), 560–604 (KHPK…SIQP), and 625–646 (TAQP…ESSA). A compositionally biased stretch (basic and acidic residues) spans 569 to 593 (QERDKESKLDAPPEKDKEKIEERKT). Coiled coils occupy residues 658-743 (AAAN…QGRE), 773-825 (ESGQ…GASG), and 982-1015 (NKVI…ERVL). Positions 774–799 (SGQKLKKLQQSMAESRKQQEELEKKI) are disordered. Residues 787 to 799 (ESRKQQEELEKKI) are compositionally biased toward basic and acidic residues. The segment covering 1162–1178 (TTTATATTTTTTTTTTT) has biased composition (low complexity). Residues 1162-1188 (TTTATATTTTTTTTTTTGGKGKERGLP) are disordered.

The protein belongs to the TRAFAC class myosin-kinesin ATPase superfamily. Kinesin family. KIF27 subfamily. As to quaternary structure, homodimer (Potential). Binds microtubules. Interacts with ci, smo, sgg, CkIalpha and protein kinase A catalytic subunit.

Its subcellular location is the cytoplasm. It is found in the cytoskeleton. In terms of biological role, regulates cubitus interruptus (ci) processing by recruiting multiple kinases to promote its efficient phosphorylation. Scaffolds multiple kinases and ci into proximity to promote its hyperphosphorylation, which then targets it for SCFSlimb/proteasome-mediated processing to generate its repressor form. Hh signaling inhibits ci phosphorylation by interfering with the cos-ci-kinases complex formation. The protein is Kinesin-like protein costa (cos) of Drosophila pseudoobscura pseudoobscura (Fruit fly).